A 180-amino-acid chain; its full sequence is Small ribosomal subunit protein uS4 (180 aa).

Residues 103 to 174 enclose the S4 RNA-binding domain; it reads RRLQTIVYKK…HPERMMIEKA (72 aa).

This sequence belongs to the universal ribosomal protein uS4 family. Part of the 30S ribosomal subunit. Contacts protein S5. The interaction surface between S4 and S5 is involved in control of translational fidelity.

Its function is as follows. One of the primary rRNA binding proteins, it binds directly to 16S rRNA where it nucleates assembly of the body of the 30S subunit. With S5 and S12 plays an important role in translational accuracy. This chain is Small ribosomal subunit protein uS4, found in Pyrococcus abyssi (strain GE5 / Orsay).